The chain runs to 200 residues: Mpv17-like protein 2 (200 aa).

3 consecutive transmembrane segments (helical) span residues Ala24–Gly40, Ala63–Leu83, and Val102–Gly122.

This sequence belongs to the peroxisomal membrane protein PXMP2/4 family. Interacts with the large mitochondrial ribosomal subunit.

The protein resides in the membrane. It localises to the mitochondrion inner membrane. Required for the assembly and stability of the mitochondrial ribosome. Is a positive regulator of mitochondrial protein synthesis. The chain is Mpv17-like protein 2 (Mpv17l2) from Mus musculus (Mouse).